Here is a 504-residue protein sequence, read N- to C-terminus: Lysine--tRNA ligase (504 aa).

Mg(2+) is bound by residues Glu414 and Glu421.

Belongs to the class-II aminoacyl-tRNA synthetase family. As to quaternary structure, homodimer. Mg(2+) serves as cofactor.

Its subcellular location is the cytoplasm. It carries out the reaction tRNA(Lys) + L-lysine + ATP = L-lysyl-tRNA(Lys) + AMP + diphosphate. This is Lysine--tRNA ligase from Photorhabdus laumondii subsp. laumondii (strain DSM 15139 / CIP 105565 / TT01) (Photorhabdus luminescens subsp. laumondii).